Reading from the N-terminus, the 1052-residue chain is Error-prone DNA polymerase (1052 aa).

Belongs to the DNA polymerase type-C family. DnaE2 subfamily.

Its subcellular location is the cytoplasm. The catalysed reaction is DNA(n) + a 2'-deoxyribonucleoside 5'-triphosphate = DNA(n+1) + diphosphate. DNA polymerase involved in damage-induced mutagenesis and translesion synthesis (TLS). It is not the major replicative DNA polymerase. The protein is Error-prone DNA polymerase of Bordetella bronchiseptica (strain ATCC BAA-588 / NCTC 13252 / RB50) (Alcaligenes bronchisepticus).